We begin with the raw amino-acid sequence, 97 residues long: Co-chaperonin GroES (97 aa).

Belongs to the GroES chaperonin family. As to quaternary structure, heptamer of 7 subunits arranged in a ring. Interacts with the chaperonin GroEL.

It localises to the cytoplasm. Together with the chaperonin GroEL, plays an essential role in assisting protein folding. The GroEL-GroES system forms a nano-cage that allows encapsulation of the non-native substrate proteins and provides a physical environment optimized to promote and accelerate protein folding. GroES binds to the apical surface of the GroEL ring, thereby capping the opening of the GroEL channel. This is Co-chaperonin GroES from Gemmatimonas aurantiaca (strain DSM 14586 / JCM 11422 / NBRC 100505 / T-27).